The sequence spans 284 residues: Cuticle collagen dpy-5 (284 aa).

The segment at 88 to 284 is disordered; sequence GLPSQGCPAG…PCPERKRRRV (197 aa). 2 triple-helical region regions span residues 94 to 126 and 143 to 270; these read CPAG…PGLN and GPPG…VGAD. Over residues 106 to 115 the composition is skewed to gly residues; it reads GEPGGTGPDG. Positions 163-177 are enriched in basic and acidic residues; the sequence is AGKRGTPGKDGEPGR. Low complexity-rich tracts occupy residues 181–193, 224–246, and 255–271; these read IGDQ…DGQP, EPGN…TGQP, and DGTP…GADA.

It belongs to the cuticular collagen family. As to quaternary structure, collagen polypeptide chains are complexed within the cuticle by disulfide bonds and other types of covalent cross-links. May be a substrate of bli-4.

Functionally, nematode cuticles are composed largely of collagen-like proteins. The cuticle functions both as an exoskeleton and as a barrier to protect the worm from its environment. In Caenorhabditis elegans, this protein is Cuticle collagen dpy-5 (dpy-5).